A 326-amino-acid polypeptide reads, in one-letter code: Sucrose operon repressor (326 aa).

The HTH lacI-type domain maps to 1 to 57 (MKPKLNDVAKLAGVSATTVSRVINNHGYLSSQTKEKVFAAMRELHYQPNNMARSLQG). The segment at residues 5-24 (LNDVAKLAGVSATTVSRVIN) is a DNA-binding region (H-T-H motif).

Negative regulator of scrB expression. The sequence is that of Sucrose operon repressor (scrR) from Pediococcus pentosaceus.